A 231-amino-acid polypeptide reads, in one-letter code: Orotidine 5'-phosphate decarboxylase (231 aa).

Substrate is bound by residues D11, K33, D60–T69, T117, R178, Q187, G207, and R208. The active-site Proton donor is the K62.

It belongs to the OMP decarboxylase family. Type 1 subfamily. Homodimer.

It carries out the reaction orotidine 5'-phosphate + H(+) = UMP + CO2. It participates in pyrimidine metabolism; UMP biosynthesis via de novo pathway; UMP from orotate: step 2/2. Catalyzes the decarboxylation of orotidine 5'-monophosphate (OMP) to uridine 5'-monophosphate (UMP). The protein is Orotidine 5'-phosphate decarboxylase of Nitrosomonas eutropha (strain DSM 101675 / C91 / Nm57).